The sequence spans 95 residues: Protein Vpr (95 aa).

The segment at 1 to 42 is homooligomerization; that stretch reads MERAPEDAGPQREPYNEWALELLEELKNEAVRHFPRIWLHGL. 3 positions are modified to phosphoserine; by host: Ser79, Ser93, and Ser95.

The protein belongs to the HIV-1 VPR protein family. Homooligomer, may form homodimer. Interacts with p6-gag region of the Pr55 Gag precursor protein through a (Leu-X-X)4 motif near the C-terminus of the P6gag protein. Interacts with host UNG. May interact with host RAD23A/HHR23A. Interacts with host VPRBP/DCAF1, leading to hijack the CUL4A-RBX1-DDB1-DCAF1/VPRBP complex, mediating ubiquitination of host proteins such as TERT and ZGPAT and arrest of the cell cycle in G2 phase. Post-translationally, phosphorylated on several residues by host. These phosphorylations regulate VPR activity for the nuclear import of the HIV-1 pre-integration complex.

The protein localises to the virion. It localises to the host nucleus. The protein resides in the host extracellular space. In terms of biological role, during virus replication, may deplete host UNG protein, and incude G2-M cell cycle arrest. Acts by targeting specific host proteins for degradation by the 26S proteasome, through association with the cellular CUL4A-DDB1 E3 ligase complex by direct interaction with host VPRPB/DCAF-1. Cell cycle arrest reportedly occurs within hours of infection and is not blocked by antiviral agents, suggesting that it is initiated by the VPR carried into the virion. Additionally, VPR induces apoptosis in a cell cycle dependent manner suggesting that these two effects are mechanistically linked. Detected in the serum and cerebrospinal fluid of AIDS patient, VPR may also induce cell death to bystander cells. During virus entry, plays a role in the transport of the viral pre-integration (PIC) complex to the host nucleus. This function is crucial for viral infection of non-dividing macrophages. May act directly at the nuclear pore complex, by binding nucleoporins phenylalanine-glycine (FG)-repeat regions. This Human immunodeficiency virus type 1 group N (isolate YBF30) (HIV-1) protein is Protein Vpr.